The following is a 30-amino-acid chain: Trypsin inhibitor 1 (30 aa).

3 disulfides stabilise this stretch: C4-C21, C11-C23, and C17-C29.

This sequence belongs to the protease inhibitor I7 (squash-type serine protease inhibitor) family.

It is found in the secreted. Inhibits trypsin. The chain is Trypsin inhibitor 1 from Citrullus lanatus (Watermelon).